The following is a 618-amino-acid chain: Dihydroxy-acid dehydratase (618 aa).

Mg(2+) is bound at residue aspartate 81. A [2Fe-2S] cluster-binding site is contributed by cysteine 122. 2 residues coordinate Mg(2+): aspartate 123 and lysine 124. An N6-carboxylysine modification is found at lysine 124. Cysteine 195 serves as a coordination point for [2Fe-2S] cluster. Residue glutamate 493 coordinates Mg(2+). Serine 519 functions as the Proton acceptor in the catalytic mechanism.

Belongs to the IlvD/Edd family. In terms of assembly, homodimer. It depends on [2Fe-2S] cluster as a cofactor. Requires Mg(2+) as cofactor.

The catalysed reaction is (2R)-2,3-dihydroxy-3-methylbutanoate = 3-methyl-2-oxobutanoate + H2O. The enzyme catalyses (2R,3R)-2,3-dihydroxy-3-methylpentanoate = (S)-3-methyl-2-oxopentanoate + H2O. The protein operates within amino-acid biosynthesis; L-isoleucine biosynthesis; L-isoleucine from 2-oxobutanoate: step 3/4. It participates in amino-acid biosynthesis; L-valine biosynthesis; L-valine from pyruvate: step 3/4. Functions in the biosynthesis of branched-chain amino acids. Catalyzes the dehydration of (2R,3R)-2,3-dihydroxy-3-methylpentanoate (2,3-dihydroxy-3-methylvalerate) into 2-oxo-3-methylpentanoate (2-oxo-3-methylvalerate) and of (2R)-2,3-dihydroxy-3-methylbutanoate (2,3-dihydroxyisovalerate) into 2-oxo-3-methylbutanoate (2-oxoisovalerate), the penultimate precursor to L-isoleucine and L-valine, respectively. In Shewanella amazonensis (strain ATCC BAA-1098 / SB2B), this protein is Dihydroxy-acid dehydratase.